The following is a 376-amino-acid chain: 5-hydroxytryptamine receptor 1D (376 aa).

The segment at 1 to 22 is disordered; that stretch reads MSPPNQSEEGLPQEASNRSLNA. N-linked (GlcNAc...) asparagine glycans are attached at residues Asn-5, Asn-17, and Asn-21. Helical transmembrane passes span 39–64, 76–97, and 110–134; these read VSLVVVLSIITLATVLSNAFVLTTIL, LIGSLATTDLLVSILVMPISIA, and LCDIWVSSDITCCTASILHLCVIAL. The cysteines at positions 111 and 188 are disulfide-linked. Asp-118 and Cys-122 together coordinate serotonin. The short motif at 135 to 137 is the DRY motif; important for ligand-induced conformation changes element; it reads DRY. The next 4 helical transmembrane spans lie at 155-176, 195-218, 300-325, and 335-358; these read AGAMIAAVWVISICISIPPLFW, ISYTIYSTCGAFYIPSVLLIILYS, KTLGIILGAFIVCWLPFFVVSLVLPI, and ALFDFFTWLGYLNSLINPIIYTVF. Serotonin is bound at residue Ser-320. The short motif at 351 to 355 is the NPxxY motif; important for ligand-induced conformation changes and signaling element; the sequence is NPIIY.

It belongs to the G-protein coupled receptor 1 family. Homodimer. Heterodimer with HTR1B.

The protein resides in the cell membrane. G-protein coupled receptor for 5-hydroxytryptamine (serotonin). Also functions as a receptor for ergot alkaloid derivatives, various anxiolytic and antidepressant drugs and other psychoactive substances. Ligand binding causes a conformation change that triggers signaling via guanine nucleotide-binding proteins (G proteins) and modulates the activity of downstream effectors, such as adenylate cyclase. HTR1D is coupled to G(i)/G(o) G alpha proteins and mediates inhibitory neurotransmission by inhibiting adenylate cyclase activity. Regulates the release of 5-hydroxytryptamine in the brain, and thereby affects neural activity. May also play a role in regulating the release of other neurotransmitters. May play a role in vasoconstriction. The sequence is that of 5-hydroxytryptamine receptor 1D (HTR1D) from Cavia porcellus (Guinea pig).